The primary structure comprises 681 residues: Pescadillo homolog (681 aa).

The BRCT domain maps to 350–469; the sequence is TAGALFAPFT…KLLRPDLYAP (120 aa). The disordered stretch occupies residues 489–681; sequence DPRASLAEQE…RRKLEKGAEK (193 aa). Positions 491–527 form a coiled coil; that stretch reads RASLAEQEEEGEAEIAAEEEEEDSDEEMEEATDGKKV. The span at 496–521 shows a compositional bias: acidic residues; sequence EQEEEGEAEIAAEEEEEDSDEEMEEA. Residues 522 to 533 are compositionally biased toward basic and acidic residues; that stretch reads TDGKKVDAKAED. Acidic residues-rich tracts occupy residues 534–546 and 554–586; these read SAEE…DDSV and GTDD…DEEE. Residues 574–681 adopt a coiled-coil conformation; it reads EEEAASESED…RRKLEKGAEK (108 aa). Residues 587–597 are compositionally biased toward basic and acidic residues; the sequence is SARTQHQKELE. Positions 617–629 are enriched in basic residues; the sequence is KKSSQAKKVASKK. The segment covering 630-640 has biased composition (basic and acidic residues); it reads RKEEEELERQK.

This sequence belongs to the pescadillo family. Component of the NOP7 complex, composed of erb1, nop7 and ytm1. The complex is held together by erb1, which interacts with nop7 via its N-terminal domain and with ytm1 via a high-affinity interaction between the seven-bladed beta-propeller domains of the 2 proteins. The NOP7 complex associates with the 66S pre-ribosome.

Its subcellular location is the nucleus. The protein localises to the nucleolus. The protein resides in the nucleoplasm. In terms of biological role, component of the NOP7 complex, which is required for maturation of the 25S and 5.8S ribosomal RNAs and formation of the 60S ribosome. In Aspergillus oryzae (strain ATCC 42149 / RIB 40) (Yellow koji mold), this protein is Pescadillo homolog (nop7).